Here is a 609-residue protein sequence, read N- to C-terminus: Membrane protein insertase YidC (609 aa).

The next 5 helical transmembrane spans lie at L8–P28, M381–L401, L451–I471, S509–L529, and I545–V565.

It belongs to the OXA1/ALB3/YidC family. Type 1 subfamily. In terms of assembly, interacts with the Sec translocase complex via SecD. Specifically interacts with transmembrane segments of nascent integral membrane proteins during membrane integration.

The protein resides in the cell inner membrane. Functionally, required for the insertion and/or proper folding and/or complex formation of integral membrane proteins into the membrane. Involved in integration of membrane proteins that insert both dependently and independently of the Sec translocase complex, as well as at least some lipoproteins. Aids folding of multispanning membrane proteins. In Ruegeria pomeroyi (strain ATCC 700808 / DSM 15171 / DSS-3) (Silicibacter pomeroyi), this protein is Membrane protein insertase YidC.